Here is a 128-residue protein sequence, read N- to C-terminus: uncharacterized protein (128 aa).

The next 4 membrane-spanning stretches (helical) occupy residues 5–25, 27–47, 60–80, and 87–107; these read ILAL…YSMM, PVLV…PLFL, QLWW…FIGL, and SAVT…HFFF. Positions 9–110 constitute an EamA domain; sequence LIWSSSLIVG…FVGHFFFKTK (102 aa).

It is found in the cell membrane. This is an uncharacterized protein from Haemophilus influenzae (strain ATCC 51907 / DSM 11121 / KW20 / Rd).